Consider the following 734-residue polypeptide: Paralemmin-3 (734 aa).

The stretch at 19–64 forms a coiled coil; that stretch reads SALYRQRLEVIAEKRRLQEEIGAARRELEEEKLRVERLKRKSLRER. Disordered regions lie at residues 62–100 and 114–217; these read RERW…RNLE and QSAS…LGVS. Residues 73–82 show a composition bias toward basic and acidic residues; sequence GPERPEEPAS. Residues 90 to 116 adopt a coiled-coil conformation; that stretch reads GQAQARIRNLEDSLFSLQSQLQLLQSA. A phosphoserine mark is found at Ser139, Ser158, Ser167, Ser170, and Ser172. Residues 186-198 show a composition bias toward polar residues; that stretch reads RPSTEAIGTSSEA. Ser270 is subject to Phosphoserine. Residues 297-308 are compositionally biased toward basic and acidic residues; the sequence is DVTGESGRDAEA. Disordered regions lie at residues 297–347, 374–400, and 413–709; these read DVTG…PGVE, PQGA…SWEV, and EKGR…YAPA. Thr311 carries the phosphothreonine modification. The span at 315–336 shows a compositional bias: basic and acidic residues; sequence RLQEQFEAETCRKEEGASRDSL. A phosphoserine mark is found at Ser332 and Ser335. Basic and acidic residues-rich tracts occupy residues 413-427, 435-452, 462-484, 494-531, 540-561, 571-582, 589-607, and 630-647; these read EKGR…REDG, TQGR…KDSE, DEEK…KGGE, LVTE…ESKT, IGDK…EKTG, EGSKKLLDREAD, EVDK…EQGK, and DEPR…KQEG. A Phosphoserine modification is found at Ser451. Residue Ser601 is modified to Phosphoserine. Position 721 is a phosphoserine (Ser721). Residues Cys728 and Cys730 are each lipidated (S-palmitoyl cysteine). Cys731 carries the post-translational modification Cysteine methyl ester. Cys731 carries S-farnesyl cysteine lipidation. A propeptide spans 732–734 (removed in mature form); the sequence is VVM.

This sequence belongs to the paralemmin family. Interacts with SIGIRR. Palmitoylated on Cys-728 and Cys-730 and prenylated on Cys-731; which is required for membrane association.

The protein localises to the cytoplasm. It localises to the cell membrane. In terms of biological role, ATP-binding protein, which may act as a adapter in the Toll-like receptor (TLR) signaling. This Mus musculus (Mouse) protein is Paralemmin-3 (Palm3).